Here is a 336-residue protein sequence, read N- to C-terminus: Pyridoxal 5'-phosphate synthase subunit PdxS (336 aa).

Residue Asp-64 coordinates D-ribose 5-phosphate. The active-site Schiff-base intermediate with D-ribose 5-phosphate is Lys-121. Gly-193 is a binding site for D-ribose 5-phosphate. Position 205 (Lys-205) interacts with D-glyceraldehyde 3-phosphate. Residues Gly-254 and 275–276 (GS) each bind D-ribose 5-phosphate.

Belongs to the PdxS/SNZ family. As to quaternary structure, in the presence of PdxT, forms a dodecamer of heterodimers.

It catalyses the reaction aldehydo-D-ribose 5-phosphate + D-glyceraldehyde 3-phosphate + L-glutamine = pyridoxal 5'-phosphate + L-glutamate + phosphate + 3 H2O + H(+). Its pathway is cofactor biosynthesis; pyridoxal 5'-phosphate biosynthesis. In terms of biological role, catalyzes the formation of pyridoxal 5'-phosphate from ribose 5-phosphate (RBP), glyceraldehyde 3-phosphate (G3P) and ammonia. The ammonia is provided by the PdxT subunit. Can also use ribulose 5-phosphate and dihydroxyacetone phosphate as substrates, resulting from enzyme-catalyzed isomerization of RBP and G3P, respectively. This Pyrobaculum aerophilum (strain ATCC 51768 / DSM 7523 / JCM 9630 / CIP 104966 / NBRC 100827 / IM2) protein is Pyridoxal 5'-phosphate synthase subunit PdxS.